Consider the following 409-residue polypeptide: Carbamoyl phosphate synthase arginine-specific small chain (409 aa).

The 193-residue stretch at 197–389 (NVALIDCGVK…FDNMSQYRAL (193 aa)) folds into the Glutamine amidotransferase type-1 domain. Cys277 (nucleophile) is an active-site residue. Active-site residues include His362 and Glu364.

It belongs to the CarA family. As to quaternary structure, heterodimer composed of 2 chains; the small (or glutamine) chain promotes the hydrolysis of glutamine to ammonia, which is used by the large (or ammonia) chain to synthesize carbamoyl phosphate.

It localises to the cytoplasm. It catalyses the reaction hydrogencarbonate + L-glutamine + 2 ATP + H2O = carbamoyl phosphate + L-glutamate + 2 ADP + phosphate + 2 H(+). The catalysed reaction is L-glutamine + H2O = L-glutamate + NH4(+). It functions in the pathway amino-acid biosynthesis; L-arginine biosynthesis; carbamoyl phosphate from bicarbonate: step 1/1. Its function is as follows. Small subunit of the arginine-specific carbamoyl phosphate synthase (CPSase). CPSase catalyzes the formation of carbamoyl phosphate from the ammonia moiety of glutamine, carbonate, and phosphate donated by ATP, constituting the first step of 2 biosynthetic pathways, one leading to arginine and/or urea and the other to pyrimidine nucleotides. The small subunit (glutamine amidotransferase) binds and cleaves glutamine to supply the large subunit with the substrate ammonia. The protein is Carbamoyl phosphate synthase arginine-specific small chain (CPA1) of Kluyveromyces lactis (strain ATCC 8585 / CBS 2359 / DSM 70799 / NBRC 1267 / NRRL Y-1140 / WM37) (Yeast).